Consider the following 154-residue polypeptide: Xanthine-guanine phosphoribosyltransferase (154 aa).

Residues 38–39 (RG), lysine 71, and 90–98 (DDLVDTGGT) each bind 5-phospho-alpha-D-ribose 1-diphosphate. Lysine 71 contacts GMP. Mg(2+) is bound at residue aspartate 91. Residues aspartate 94 and isoleucine 137 each contribute to the guanine site. Xanthine-binding residues include aspartate 94 and isoleucine 137. Residues 94-98 (DTGGT) and 136-137 (WI) contribute to the GMP site.

It belongs to the purine/pyrimidine phosphoribosyltransferase family. XGPT subfamily. In terms of assembly, homotetramer. Mg(2+) serves as cofactor.

Its subcellular location is the cell inner membrane. The enzyme catalyses GMP + diphosphate = guanine + 5-phospho-alpha-D-ribose 1-diphosphate. It catalyses the reaction XMP + diphosphate = xanthine + 5-phospho-alpha-D-ribose 1-diphosphate. It carries out the reaction IMP + diphosphate = hypoxanthine + 5-phospho-alpha-D-ribose 1-diphosphate. It functions in the pathway purine metabolism; GMP biosynthesis via salvage pathway; GMP from guanine: step 1/1. The protein operates within purine metabolism; XMP biosynthesis via salvage pathway; XMP from xanthine: step 1/1. In terms of biological role, purine salvage pathway enzyme that catalyzes the transfer of the ribosyl-5-phosphate group from 5-phospho-alpha-D-ribose 1-diphosphate (PRPP) to the N9 position of the 6-oxopurines guanine and xanthine to form the corresponding ribonucleotides GMP (guanosine 5'-monophosphate) and XMP (xanthosine 5'-monophosphate), with the release of PPi. To a lesser extent, also acts on hypoxanthine. The sequence is that of Xanthine-guanine phosphoribosyltransferase from Buchnera aphidicola subsp. Schizaphis graminum (strain Sg).